The primary structure comprises 243 residues: F-box protein pof15 (243 aa).

Residues 28–73 (QTSSTLLPVEVIDSVMQYLPAHDVIQSSFASYPLTLIANKIIRARL) form the F-box domain.

It functions in the pathway protein modification; protein ubiquitination. Functionally, probable substrate recognition component of a SCF (SKP1-CUL1-F-box protein) E3 ubiquitin-protein ligase complex that mediates the ubiquitination and subsequent proteasomal degradation of target proteins. This chain is F-box protein pof15 (pof15), found in Schizosaccharomyces pombe (strain 972 / ATCC 24843) (Fission yeast).